Here is a 194-residue protein sequence, read N- to C-terminus: FMN-dependent NADH:quinone oxidoreductase (194 aa).

FMN is bound by residues S10 and 90–93; that span reads MYNL.

It belongs to the azoreductase type 1 family. As to quaternary structure, homodimer. FMN is required as a cofactor.

The catalysed reaction is 2 a quinone + NADH + H(+) = 2 a 1,4-benzosemiquinone + NAD(+). It carries out the reaction N,N-dimethyl-1,4-phenylenediamine + anthranilate + 2 NAD(+) = 2-(4-dimethylaminophenyl)diazenylbenzoate + 2 NADH + 2 H(+). Functionally, quinone reductase that provides resistance to thiol-specific stress caused by electrophilic quinones. In terms of biological role, also exhibits azoreductase activity. Catalyzes the reductive cleavage of the azo bond in aromatic azo compounds to the corresponding amines. The sequence is that of FMN-dependent NADH:quinone oxidoreductase from Haemophilus influenzae (strain ATCC 51907 / DSM 11121 / KW20 / Rd).